Reading from the N-terminus, the 185-residue chain is Ribosome-recycling factor (185 aa).

It belongs to the RRF family.

It localises to the cytoplasm. Its function is as follows. Responsible for the release of ribosomes from messenger RNA at the termination of protein biosynthesis. May increase the efficiency of translation by recycling ribosomes from one round of translation to another. This Clavibacter sepedonicus (Clavibacter michiganensis subsp. sepedonicus) protein is Ribosome-recycling factor.